The primary structure comprises 483 residues: Glutarate-semialdehyde dehydrogenase (483 aa).

NADP(+) contacts are provided by residues 156-157 (WN), 180-183 (KPAS), and 233-234 (GS). Glutamate 255 (proton acceptor) is an active-site residue. Residue leucine 256 participates in NADP(+) binding. Residue cysteine 289 is the Nucleophile of the active site. Residue glutamate 386 participates in NADP(+) binding.

The protein belongs to the aldehyde dehydrogenase family.

It catalyses the reaction 5-oxopentanoate + NADP(+) + H2O = glutarate + NADPH + 2 H(+). Its pathway is amino-acid degradation. Functionally, catalyzes the conversion of 5-oxopentanoate (glutarate semialdehyde) to glutarate. Involved in L-lysine degradation. The protein is Glutarate-semialdehyde dehydrogenase of Pseudomonas aeruginosa (strain ATCC 15692 / DSM 22644 / CIP 104116 / JCM 14847 / LMG 12228 / 1C / PRS 101 / PAO1).